A 153-amino-acid chain; its full sequence is MKTFVLHIFIFALVAFASASRDSAKKIGSQYDNFETCLTEHGLTEDDIFSIGEVSSGQHKTNHEDTELHKNGCVMQCMLEKDGLMSGADYDEEKMREDYIKETGAQPGDQRIEALNACMQETKDMEDKCDKSLVLVACVLAAEAILADSSEAA.

An N-terminal signal peptide occupies residues Met1–Ala19. Disulfide bonds link Cys37–Cys77, Cys73–Cys129, and Cys118–Cys138.

This sequence belongs to the PBP/GOBP family. In terms of assembly, homodimer.

The protein resides in the secreted. Colony queen number, a major feature of social organization, is associated with worker genotype for Gp-9. Colonies are headed by either a single reproductive queen (monogyne form) or multiple queens (polygyne form). Differences in worker Gp-9 genotypes between social forms may cause differences in workers' abilities to recognize queens and regulate their numbers. The protein is Pheromone-binding protein Gp-9 of Solenopsis electra (Fire ant).